The chain runs to 148 residues: Single-stranded DNA-binding protein, mitochondrial (148 aa).

Residues 1 to 16 (MFRRPVLQVLRQFVRH) constitute a mitochondrion transit peptide. The SSB domain occupies 30 to 141 (LNRVHLLGRV…IIADNIIFLS (112 aa)). A phosphoserine mark is found at S67 and S79. At K113 the chain carries N6-acetyllysine. K122 is subject to N6-succinyllysine.

As to quaternary structure, homotetramer. Interacts with MPG/AAG, through inhibition of its glycosylase activity it potentially prevents formation of DNA breaks in ssDNA, ensuring that base removal primarily occurs in dsDNA. Interacts with POLDIP2. Interacts with PRIMPOL.

The protein localises to the mitochondrion. The protein resides in the mitochondrion matrix. It localises to the mitochondrion nucleoid. Functionally, binds preferentially and cooperatively to pyrimidine rich single-stranded DNA (ss-DNA). In vitro, required to maintain the copy number of mitochondrial DNA (mtDNA) and plays a crucial role during mtDNA replication by stimulating the activity of the replisome components POLG and TWNK at the replication fork. Promotes the activity of the gamma complex polymerase POLG, largely by organizing the template DNA and eliminating secondary structures to favor ss-DNA conformations that facilitate POLG activity. In addition it is able to promote the 5'-3' unwinding activity of the mtDNA helicase TWNK. May also function in mtDNA repair. In Pongo abelii (Sumatran orangutan), this protein is Single-stranded DNA-binding protein, mitochondrial (SSBP1).